The primary structure comprises 424 residues: NADH-quinone oxidoreductase subunit H (424 aa).

The next 9 membrane-spanning stretches (helical) occupy residues 11–31 (LVVA…LVAI), 79–99 (FVYF…FAFI), 119–139 (LPVA…GIVL), 160–180 (VISY…YAGS), 193–213 (VWYI…MVGE), 255–275 (VSAL…PLNL), 283–303 (WWPV…YFWL), 317–337 (ALGW…AAVI), and 347–367 (YWTP…VMSL). The interval 376 to 424 (AVTKARRRGKQPAAGPDEQGALEPLFPTPPLPMKPLAQPVGASKENARG) is disordered.

Belongs to the complex I subunit 1 family. NDH-1 is composed of 14 different subunits. Subunits NuoA, H, J, K, L, M, N constitute the membrane sector of the complex.

Its subcellular location is the cell membrane. It catalyses the reaction a quinone + NADH + 5 H(+)(in) = a quinol + NAD(+) + 4 H(+)(out). NDH-1 shuttles electrons from NADH, via FMN and iron-sulfur (Fe-S) centers, to quinones in the respiratory chain. The immediate electron acceptor for the enzyme in this species is believed to be menaquinone. Couples the redox reaction to proton translocation (for every two electrons transferred, four hydrogen ions are translocated across the cytoplasmic membrane), and thus conserves the redox energy in a proton gradient. This subunit may bind ubiquinone. In Mycobacterium ulcerans (strain Agy99), this protein is NADH-quinone oxidoreductase subunit H.